A 168-amino-acid chain; its full sequence is Secretory-abundant heat soluble protein 33020 (168 aa).

Residues 1–19 (MARFLVALALFGVVAMTAA) form the signal peptide. The segment at 26-57 (EWSGKPWLGKFVAEVSDKSENWEAFVDALGLP) is SAHS-c1. Residues 72-100 (YKQGEHYHHILSLPDKNINKDIEFTLGQE) form an SAHS-c2 region. An SAHS-c3 region spans residues 113 to 162 (KYFEDGNKLVADVSIPAKGKSIHDVYDVQGDQLIKSYKVGDVVAKKWFKK).

It belongs to the Secretory-abundant heat soluble protein (SAHS) family.

It is found in the secreted. In terms of biological role, secreted heat soluble protein acting as a molecular shield in water-deficient condition. Tardigrade-specific intrinsically disordered proteins (TDPs) are essential for desiccation tolerance by forming non-crystalline amorphous solids upon desiccation, and this vitrified state mirrors their protective capabilities. The sequence is that of Secretory-abundant heat soluble protein 33020 from Hypsibius exemplaris (Freshwater tardigrade).